Consider the following 166-residue polypeptide: Endoribonuclease YbeY (166 aa).

Zn(2+)-binding residues include histidine 129, histidine 133, and histidine 139.

Belongs to the endoribonuclease YbeY family. The cofactor is Zn(2+).

The protein localises to the cytoplasm. Functionally, single strand-specific metallo-endoribonuclease involved in late-stage 70S ribosome quality control and in maturation of the 3' terminus of the 16S rRNA. The chain is Endoribonuclease YbeY from Heliobacterium modesticaldum (strain ATCC 51547 / Ice1).